A 339-amino-acid chain; its full sequence is DNA-directed RNA polymerase subunit alpha (339 aa).

An alpha N-terminal domain (alpha-NTD) region spans residues 1–233; the sequence is MVREEVAGST…DLFLPFLHAE (233 aa). An alpha C-terminal domain (alpha-CTD) region spans residues 264 to 339; it reads KKGIPLNCIF…IDLLKNKLSF (76 aa).

The protein belongs to the RNA polymerase alpha chain family. In plastids the minimal PEP RNA polymerase catalytic core is composed of four subunits: alpha, beta, beta', and beta''. When a (nuclear-encoded) sigma factor is associated with the core the holoenzyme is formed, which can initiate transcription.

The protein resides in the plastid. It is found in the chloroplast. The enzyme catalyses RNA(n) + a ribonucleoside 5'-triphosphate = RNA(n+1) + diphosphate. Functionally, DNA-dependent RNA polymerase catalyzes the transcription of DNA into RNA using the four ribonucleoside triphosphates as substrates. This Festucopsis serpentini protein is DNA-directed RNA polymerase subunit alpha.